The primary structure comprises 421 residues: 4-hydroxy-3-methylbut-2-en-1-yl diphosphate synthase (flavodoxin) (421 aa).

4 residues coordinate [4Fe-4S] cluster: cysteine 311, cysteine 314, cysteine 357, and glutamate 364.

This sequence belongs to the IspG family. Requires [4Fe-4S] cluster as cofactor.

It carries out the reaction (2E)-4-hydroxy-3-methylbut-2-enyl diphosphate + oxidized [flavodoxin] + H2O + 2 H(+) = 2-C-methyl-D-erythritol 2,4-cyclic diphosphate + reduced [flavodoxin]. It functions in the pathway isoprenoid biosynthesis; isopentenyl diphosphate biosynthesis via DXP pathway; isopentenyl diphosphate from 1-deoxy-D-xylulose 5-phosphate: step 5/6. In terms of biological role, converts 2C-methyl-D-erythritol 2,4-cyclodiphosphate (ME-2,4cPP) into 1-hydroxy-2-methyl-2-(E)-butenyl 4-diphosphate. This is 4-hydroxy-3-methylbut-2-en-1-yl diphosphate synthase (flavodoxin) from Xanthomonas axonopodis pv. citri (strain 306).